A 644-amino-acid chain; its full sequence is Arginine--tRNA ligase (644 aa).

The 'HIGH' region signature appears at 134–144 (VNPTKPLHMGH).

It belongs to the class-I aminoacyl-tRNA synthetase family.

The protein resides in the cytoplasm. It catalyses the reaction tRNA(Arg) + L-arginine + ATP = L-arginyl-tRNA(Arg) + AMP + diphosphate. This chain is Arginine--tRNA ligase, found in Thermococcus sibiricus (strain DSM 12597 / MM 739).